Reading from the N-terminus, the 2205-residue chain is MGAQVSSQKVGAHENSNRAYGGSTINYTTINYYRDSASNAASKQDFAQDPSKFTEPIKDVLIKTAPTLNSPNIEACGYSDRVMQLTLGNSTITTQEAANSVVAYGRWPEYIKDSEANPVDQPTEPDVAACRFYTLDTVTWRKESRGWWWKLPDALKDMGLFGQNMFYHYLGRASYTVHVQCNASKFHQGALGVFAVPEMCLAGDSATHMLTKYENANPGEKGGEFKGSFTLDTNATNPARNFCPVDYLFGSGVLAGNAFVYPHQIINLRTNNCATLVLPYVNSLSIDSMTKHNNWGIAILPLAPLDFATESSTEIPITLTIAPMCCEFNGLRNITVPRTQGLPVLNTPGSNQYLTADNYQSPCAIPEFDVTPPIDIPGEVRNMMELAEIDTMIPLNLTSQRKNTMDMYRVELNDAAHSDTPILCLSLSPASDPRLAHTMLGEILNYYTHWAGSLKFTFLFCGSMMATGKLLVSYAPPGAKAPESRKEAMLGTHVIWDIGLQSSCTMVVPWISNTTYRQTINDSFTEGGYISMFYQTRVVVPLSTPRKMDILGFVSACNDFSVRLLRDTTHISQEVMPQGLGDLIEGVVEGVTRNALTPLTPVNNLPDTRSSGPAHSKETPALTAVETGATNPLVPSDTVQTRHVIQKRTRSESTVESFFARGACVAIIEVDNDAPTRRASKLFSVWKITYKDTVQLRRKLEFFTYSRFDMEFTFVVTSNYTDANNGHALNQVYQIMYIPPGAPIPGKRNDYTWQTSSNPSVFYTYGAPPARISVPYVGIANAYSHFYDGFAKVPLAGQASTEGDSLYGAASLNDFGSLAVRVVNDHNPTKLTSKIRVYMKPKHVRVWCPRPPRAVPYYGPGVDYKDGLTPLPEKGLITYGFGHQNKAVYTAGYKICNYHLATQEDLQNAINIMWIRDLLVVESKAQGIDSIARCNCHTGVYYCESRRKYYPVSFVGPTFQYMEANEYYPARYQSHMLIGHGFASPGDCGGILRCQHGVIGIITAGGEGLVAFSDIRDLYAYEVEAMEQGVSNYIESLGAAFGSGFTQQIGNKISELTSMVTSTITEKLLKNLIKIISSLVIITRNYEDTTTVLATLALLGCDASPWQWLKKKACDILEIPYIMRQGDSWLKKFTEACNAAKGLEWVSNKISKFIDWLKEKIIPQARDKLEFVTKLKQLEMLENQIATIHQSCPSQEHQEILFNNVRWLSIQSRRFAPLYAVEAKRIQKLEHTINNYVQFKSKHRIEPVCLLVHGSPGTGKSVATNLIARAIAEKENTSTYSLPPDPSHFDGYKQQGVVIMDDLNQNPDGADMKLFCQMVSTVEFIPPMASLEEKGILFTSNYVLASTNSSRITPPTVAHSDALARRFAFDMDIQIMSEYSRDGKLNMAMATEMCKNCHQPANFKRCCPLVCGKAIQLMDKSSRVRYSIDQITTMIINERNRRSSIGNCMEALFQSPLQYKDLKIDIKTTPPPECINDLLHAVDSQEVRDYCEKKGWIADITSQVQTERNINRAMTILQAVTTFAAVAGVVYVMYKLFAGHQGAYTGLPNKRPNVPTIRTAKVQGPGFDYAVAMAKRNILTATTIKGEFTMLGVHDNVAILPTHASPGETIVIDGKEVEVLDAKALEDQAGTNLEITIVTLKRNEKFRDIRPHIPTQITETNDGVLIVNTSKYPNMYVPVGAVTEQGYLNLGGRQTARTLMYNFPTRAGQCGGVITCTGKVIGMHVGGNGSHGFAAALKRSYFTQSQGEIQWMRPSKEVGYPVINAPSKTKLEPSAFHYVFEGVKEPAVLTKSDPRLKTDFEEAIFSKYVGNKITEVDEYMKEAVDHYAGQLMSLDINTEQMCLEDAMYGTDGLEALDLSTSAGYPYVAMGKKKRDILNKQTRDTKEMQRLLDTYGINLPLVTYVKDELRSKTKVEQGKSRLIEASSLNDSVAMRMAFGNLYAAFHKNPGVVTGSAVGCDPDLFWSKIPVLMEEKLFDYTGYDASLSPAWFEALKMVLEKIGFGDRVDYIDYLNHSHHLYKNKTYCVKGGMPSGCSGTSIFNSMINNLIIRTLLLKTYKGIDLDHLKMIAYGDDVIASYPHEVDASLLAQSGKDYGLTMTPADKSATFETVTWENVTFLKRFFRADEKYPFLVHPVMPMKEIHESIRWTKDPRNTQDHVRSLCLLAWHSGEEEYNKFLAKIRSVPIGRALLLPEYSTLYRRWLDSF.

A lipid anchor (N-myristoyl glycine; by host) is attached at glycine 2. At 2–1518 (GAQVSSQKVG…NINRAMTILQ (1517 aa)) the chain is on the cytoplasmic side. An amphipathic alpha-helix region spans residues 579–599 (GLGDLIEGVVEGVTRNALTPL). Polar residues predominate over residues 598–613 (PLTPVNNLPDTRSSGP). Positions 598–619 (PLTPVNNLPDTRSSGPAHSKET) are disordered. Residues histidine 899 and aspartate 917 each act as for protease 2A activity in the active site. 2 residues coordinate Zn(2+): cysteine 934 and cysteine 936. Cysteine 988 (for protease 2A activity) is an active-site residue. Positions 994 and 996 each coordinate Zn(2+). The membrane-binding stretch occupies residues 1126–1198 (GDSWLKKFTE…HQSCPSQEHQ (73 aa)). An oligomerization region spans residues 1126–1264 (GDSWLKKFTE…SPGTGKSVAT (139 aa)). The tract at residues 1147 to 1151 (SNKIS) is RNA-binding. The SF3 helicase domain occupies 1230–1386 (EHTINNYVQF…SEYSRDGKLN (157 aa)). 1254–1261 (GSPGTGKS) contributes to the ATP binding site. Residues cysteine 1394, cysteine 1397, cysteine 1406, and cysteine 1411 each contribute to the Zn(2+) site. A C4-type zinc finger spans residues 1394 to 1411 (CKNCHQPANFKRCCPLVC). Residues 1438-1445 (ERNRRSSI) are RNA-binding. An oligomerization region spans residues 1449 to 1454 (MEALFQ). An intramembrane segment occupies 1519–1534 (AVTTFAAVAGVVYVMY). The Cytoplasmic segment spans residues 1535-2205 (KLFAGHQGAY…TLYRRWLDSF (671 aa)). An O-(5'-phospho-RNA)-tyrosine modification is found at tyrosine 1544. Residues 1564 to 1742 (GPGFDYAVAM…FAAALKRSYF (179 aa)) form the Peptidase C3 domain. Active-site for protease 3C activity residues include histidine 1603, glutamate 1634, and cysteine 1710. The RdRp catalytic domain occupies 1971–2086 (MEEKLFDYTG…SYPHEVDASL (116 aa)). Aspartate 1977 and aspartate 2072 together coordinate Mg(2+).

The protein belongs to the picornaviruses polyprotein family. Interacts with capsid protein VP1 and capsid protein VP3 to form heterotrimeric protomers. In terms of assembly, interacts with capsid protein VP0, and capsid protein VP3 to form heterotrimeric protomers. Interacts with human PVR. Five protomers subsequently associate to form pentamers which serve as building blocks for the capsid. Interacts with capsid protein VP2, capsid protein VP3 and capsid protein VP4 following cleavage of capsid protein VP0. As to quaternary structure, interacts with capsid protein VP1 and capsid protein VP3 in the mature capsid. Interacts with capsid protein VP0 and capsid protein VP1 to form heterotrimeric protomers. Five protomers subsequently associate to form pentamers which serve as building blocks for the capsid. Interacts with capsid protein VP4 in the mature capsid. Interacts with protein 2C; this interaction may be important for virion morphogenesis. In terms of assembly, interacts with capsid protein VP1 and capsid protein VP3. As to quaternary structure, homodimer. Homohexamer; forms a hexameric ring structure with 6-fold symmetry characteristic of AAA+ ATPases. Interacts (via N-terminus) with host RTN3 (via reticulon domain); this interaction is important for viral replication. Interacts with capsid protein VP3; this interaction may be important for virion morphogenesis. In terms of assembly, interacts with protein 3CD. As to quaternary structure, homodimer. Interacts with host GBF1. Interacts (via GOLD domain) with host ACBD3 (via GOLD domain); this interaction allows the formation of a viral protein 3A/ACBD3 heterotetramer with a 2:2 stoichiometry, which will stimulate the recruitment of host PI4KB in order to synthesize PI4P at the viral RNA replication sites. Interacts with RNA-directed RNA polymerase. In terms of assembly, interacts with protein 3AB and with RNA-directed RNA polymerase. As to quaternary structure, interacts with Viral protein genome-linked and with protein 3CD. It depends on Mg(2+) as a cofactor. Post-translationally, specific enzymatic cleavages in vivo by the viral proteases yield processing intermediates and the mature proteins. Myristoylation is required for the formation of pentamers during virus assembly. Further assembly of 12 pentamers and a molecule of genomic RNA generates the provirion. In terms of processing, during virion maturation, immature virions are rendered infectious following cleavage of VP0 into VP4 and VP2. This maturation seems to be an autocatalytic event triggered by the presence of RNA in the capsid and it is followed by a conformational change infectious virion. Post-translationally, myristoylation is required during RNA encapsidation and formation of the mature virus particle. VPg is uridylylated by the polymerase into VPg-pUpU. This acts as a nucleotide-peptide primer for the genomic RNA replication.

Its subcellular location is the virion. It is found in the host cytoplasm. The protein localises to the host cytoplasmic vesicle membrane. It localises to the host nucleus. It catalyses the reaction a ribonucleoside 5'-triphosphate + H2O = a ribonucleoside 5'-diphosphate + phosphate + H(+). The enzyme catalyses Selective cleavage of Tyr-|-Gly bond in the picornavirus polyprotein.. It carries out the reaction RNA(n) + a ribonucleoside 5'-triphosphate = RNA(n+1) + diphosphate. The catalysed reaction is Selective cleavage of Gln-|-Gly bond in the poliovirus polyprotein. In other picornavirus reactions Glu may be substituted for Gln, and Ser or Thr for Gly.. Replication or transcription is subject to high level of random mutations by the nucleotide analog ribavirin. Functionally, forms an icosahedral capsid of pseudo T=3 symmetry with capsid proteins VP2 and VP3. The capsid is 300 Angstroms in diameter, composed of 60 copies of each capsid protein and enclosing the viral positive strand RNA genome. Capsid protein VP1 mainly forms the vertices of the capsid. Capsid protein VP1 interacts with host cell receptor PVR to provide virion attachment to target host cells. This attachment induces virion internalization predominantly through clathrin- and caveolin-independent endocytosis in Hela cells and through caveolin-mediated endocytosis in brain microvascular endothelial cells. Tyrosine kinases are probably involved in the entry process. Virus binding to PVR induces increased junctional permeability and rearrangement of junctional proteins. Modulation of endothelial tight junctions, as well as cytolytic infection of endothelial cells themselves, may result in loss of endothelial integrity which may help the virus to reach the CNS. After binding to its receptor, the capsid undergoes conformational changes. Capsid protein VP1 N-terminus (that contains an amphipathic alpha-helix) and capsid protein VP4 are externalized. Together, they shape a pore in the host membrane through which viral genome is translocated to host cell cytoplasm. Forms an icosahedral capsid of pseudo T=3 symmetry with capsid proteins VP2 and VP3. The capsid is 300 Angstroms in diameter, composed of 60 copies of each capsid protein and enclosing the viral positive strand RNA genome. In terms of biological role, lies on the inner surface of the capsid shell. After binding to the host receptor, the capsid undergoes conformational changes. Capsid protein VP4 is released, Capsid protein VP1 N-terminus is externalized, and together, they shape a pore in the host membrane through which the viral genome is translocated into the host cell cytoplasm. Its function is as follows. Component of immature procapsids, which is cleaved into capsid proteins VP4 and VP2 after maturation. Allows the capsid to remain inactive before the maturation step. Functionally, cysteine protease that cleaves viral polyprotein and specific host proteins. It is responsible for the autocatalytic cleavage between the P1 and P2 regions, which is the first cleavage occurring in the polyprotein. Also cleaves the host translation initiation factor EIF4G1, in order to shut down the capped cellular mRNA translation. Inhibits the host nucleus-cytoplasm protein and RNA trafficking by cleaving host members of the nuclear pores including NUP98, NUP62 and NUP153. Counteracts stress granule formation probably by antagonizing its assembly or promoting its dissassembly. Cleaves and inhibits host IFIH1/MDA5, thereby inhibiting the type-I IFN production and the establishment of the antiviral state. Cleaves and inhibits host MAVS, thereby inhibiting the type-I IFN production and the establishment of the antiviral state. Plays an essential role in the virus replication cycle by acting as a viroporin. Creates a pore in the host endoplasmic reticulum and as a consequence releases Ca2+ in the cytoplasm of infected cell. In turn, high levels of cytoplasmic calcium may trigger membrane trafficking and transport of viral ER-associated proteins to viroplasms, sites of viral genome replication. In terms of biological role, induces and associates with structural rearrangements of intracellular membranes. Displays RNA-binding, nucleotide binding and NTPase activities. May play a role in virion morphogenesis and viral RNA encapsidation by interacting with the capsid protein VP3. Its function is as follows. Localizes the viral replication complex to the surface of membranous vesicles. Together with protein 3CD binds the Cis-Active RNA Element (CRE) which is involved in RNA synthesis initiation. Acts as a cofactor to stimulate the activity of 3D polymerase, maybe through a nucleid acid chaperone activity. Functionally, localizes the viral replication complex to the surface of membranous vesicles. It inhibits host cell endoplasmic reticulum-to-Golgi apparatus transport and causes the disassembly of the Golgi complex, possibly through GBF1 interaction. This would result in depletion of MHC, trail receptors and IFN receptors at the host cell surface. Plays an essential role in viral RNA replication by recruiting ACBD3 and PI4KB at the viral replication sites, thereby allowing the formation of the rearranged membranous structures where viral replication takes place. Acts as a primer for viral RNA replication and remains covalently bound to viral genomic RNA. VPg is uridylylated prior to priming replication into VPg-pUpU. The oriI viral genomic sequence may act as a template for this. The VPg-pUpU is then used as primer on the genomic RNA poly(A) by the RNA-dependent RNA polymerase to replicate the viral genome. During genome replication, the VPg-RNA linkage is removed by the host TDP2, thereby accelerating replication. During the late stage of the replication cycle, host TDP2 is excluded from sites of viral RNA synthesis and encapsidation, allowing for the generation of progeny virions. In terms of biological role, involved in the viral replication complex and viral polypeptide maturation. It exhibits protease activity with a specificity and catalytic efficiency that is different from protease 3C. Protein 3CD lacks polymerase activity. Protein 3CD binds to the 5'UTR of the viral genome. Its function is as follows. Major viral protease that mediates proteolytic processing of the polyprotein. Cleaves host EIF5B, contributing to host translation shutoff. Also cleaves host PABPC1, contributing to host translation shutoff. Cleaves host RIGI and thus contributes to the inhibition of type I interferon production. Cleaves host NLRP1, triggers host N-glycine-mediated degradation of the autoinhibitory NLRP1 N-terminal fragment. Inhibits the integrated stress response (ISR) in the infected cell by cleaving host G3BP1. Stress granule formation is thus inhibited, which allows protein synthesis and viral replication. Functionally, replicates the viral genomic RNA on the surface of intracellular membranes. May form linear arrays of subunits that propagate along a strong head-to-tail interaction called interface-I. Covalently attaches UMP to a tyrosine of VPg, which is used to prime RNA synthesis. The positive stranded RNA genome is first replicated at virus induced membranous vesicles, creating a dsRNA genomic replication form. This dsRNA is then used as template to synthesize positive stranded RNA genomes. ss(+)RNA genomes are either translated, replicated or encapsidated. The sequence is that of Genome polyprotein from Homo sapiens (Human).